The primary structure comprises 1007 residues: Rho-type GTPase-activating protein 1 (1007 aa).

2 LIM zinc-binding domains span residues 13–66 (CVRC…CFDC) and 70–122 (CKNC…CLSC). Disordered regions lie at residues 203 to 293 (ITGY…KSPS), 401 to 478 (EKYS…STSL), and 505 to 600 (KETA…NDPS). The span at 212–221 (NSGSSKFGSN) shows a compositional bias: low complexity. 2 stretches are compositionally biased toward polar residues: residues 250–261 (ANMSLNVATDPT) and 270–293 (HSRN…KSPS). Phosphothreonine is present on Thr-278. Ser-291 carries the post-translational modification Phosphoserine. A compositionally biased stretch (basic residues) spans 411–421 (KGRKISRSLSR). The span at 454 to 466 (RSQDLMRDNDSHT) shows a compositional bias: basic and acidic residues. Polar residues-rich tracts occupy residues 467–478 (GLDTPNSNSTSL) and 529–579 (SPAT…LENS). Thr-532 is subject to Phosphothreonine. Over residues 583–600 (EEQKETLYENSESRNDPS) the composition is skewed to basic and acidic residues. The region spanning 791-1006 (SSLVARCNYE…FIFGNYKDIL (216 aa)) is the Rho-GAP domain.

Functionally, GTPase-activating protein (GAP) for CDC42 and/or RHO1. Negative regulator of the pheromone-response pathway through the STE20 protein kinase; acts at a step between the G-protein and the MAP kinase module. Dominant suppressor of bud emergence defect caused by deletion of IPL2/BEM2. Involved in the control of polarized cell growth and proper bud site selection. The chain is Rho-type GTPase-activating protein 1 (RGA1) from Saccharomyces cerevisiae (strain ATCC 204508 / S288c) (Baker's yeast).